Here is a 273-residue protein sequence, read N- to C-terminus: Urease accessory protein UreD (273 aa).

The protein belongs to the UreD family. UreD, UreF and UreG form a complex that acts as a GTP-hydrolysis-dependent molecular chaperone, activating the urease apoprotein by helping to assemble the nickel containing metallocenter of UreC. The UreE protein probably delivers the nickel.

The protein localises to the cytoplasm. Functionally, required for maturation of urease via the functional incorporation of the urease nickel metallocenter. This is Urease accessory protein UreD from Rhizobium rhizogenes (strain K84 / ATCC BAA-868) (Agrobacterium radiobacter).